Here is a 457-residue protein sequence, read N- to C-terminus: L-lysine-epsilon aminotransferase (457 aa).

Pyridoxal 5'-phosphate-binding residues include G131 and A132. The 2-oxoglutarate site is built by R172 and Q278. Residue R172 coordinates L-lysine. Q278 lines the pyridoxal 5'-phosphate pocket. K304 is modified (N6-(pyridoxal phosphate)lysine). R427 serves as a coordination point for 2-oxoglutarate.

The protein belongs to the class-III pyridoxal-phosphate-dependent aminotransferase family. In terms of assembly, monomer. Pyridoxal 5'-phosphate serves as cofactor.

The catalysed reaction is L-lysine + 2-oxoglutarate = (S)-2-amino-6-oxohexanoate + L-glutamate. Its pathway is antibiotic biosynthesis; cephamycin C biosynthesis. Its activity is regulated as follows. Activity is induced in the presence of high concentrations of lysine, but not by L-alpha-aminoadipic acid. Not repressed by ammonium ions. Its function is as follows. Catalyzes the transfer of the terminal amino group of L-lysine to alpha-ketoglutarate to yield L-glutamate and 2-aminoadipate 6-semialdehyde ((S)-2-amino-6-oxohexanoate), which is spontaneously converted to the dehydrated form 1-piperideine 6-carboxylate. Shows a high specificity for L-lysine as substrate although L-ornithine can also be used, leading to the formation of an o-aminobenzaldehyde reactive compound. Only cis-oxaloacetate and pyruvate can replace alpha-ketoglutarate, but with very low efficiency. In Streptomyces clavuligerus, this protein is L-lysine-epsilon aminotransferase.